Consider the following 611-residue polypeptide: Protein spaetzle 3 (611 aa).

A signal peptide spans 1-14; sequence MALTNFSLPFGALG. Asn5 is a glycosylation site (N-linked (GlcNAc...) asparagine). The segment at 57–322 is disordered; the sequence is EYFKNNPYAP…NDKSNNNQMP (266 aa). Low complexity-rich tracts occupy residues 104–120, 127–153, and 169–185; these read QQVQ…QHQQ, SVSF…LTQT, and PGQQ…QQKQ. The span at 191-210 shows a compositional bias: polar residues; it reads GSASATFTKNSGSFSITSFG. Residues 218 to 239 show a composition bias toward pro residues; that stretch reads PPQPQQPPPSQQQQPPPAPPPQ. A compositionally biased stretch (acidic residues) spans 288–306; the sequence is YDVEEGEEDEEEDGEEEGQ. 2 N-linked (GlcNAc...) asparagine glycosylation sites follow: Asn335 and Asn351. The interval 477–518 is disordered; sequence KKRQAAAGGSRNRGGSAGGSGNGNTNANRQPGNKNGSSGTGR. The segment covering 487–498 has biased composition (gly residues); the sequence is RNRGGSAGGSGN. Asn511 is a glycosylation site (N-linked (GlcNAc...) asparagine). Residues 521 to 609 enclose the Spaetzle domain; it reads ACESKIEIVT…LFPSCCVCRC (89 aa). 3 disulfides stabilise this stretch: Cys522-Cys573, Cys559-Cys605, and Cys567-Cys607.

In terms of assembly, homodimer; disulfide-linked.

In terms of biological role, neurotrophin which may function as a ligand to the Toll-related receptor Tollo. Involved in a Tollo and JNK signaling pathway that positively regulates neuromuscular junction (NMJ) growth in presynaptic motorneurons. May function by activating Tollo to promote the phosphorylation of JNK. This Drosophila melanogaster (Fruit fly) protein is Protein spaetzle 3.